We begin with the raw amino-acid sequence, 117 residues long: uncharacterized protein (117 aa).

This is an uncharacterized protein from Saccharomyces cerevisiae (strain ATCC 204508 / S288c) (Baker's yeast).